Consider the following 115-residue polypeptide: MRVEILSSKIHRATVTDANLNYVGSITIDEELMRAANLLENQKVEILDVNNGERFATYVIKGKKGEICLNGAAARKVCIGDIVIIVAYASMKFKKAKKFSPTIVHVNAKNEMIKK.

Residue serine 25 is the Schiff-base intermediate with substrate; via pyruvic acid of the active site. Serine 25 bears the Pyruvic acid (Ser) mark. Threonine 57 contacts substrate. Tyrosine 58 acts as the Proton donor in catalysis. Position 71–73 (71–73 (GAA)) interacts with substrate.

It belongs to the PanD family. In terms of assembly, heterooctamer of four alpha and four beta subunits. Pyruvate is required as a cofactor. In terms of processing, is synthesized initially as an inactive proenzyme, which is activated by self-cleavage at a specific serine bond to produce a beta-subunit with a hydroxyl group at its C-terminus and an alpha-subunit with a pyruvoyl group at its N-terminus.

Its subcellular location is the cytoplasm. It catalyses the reaction L-aspartate + H(+) = beta-alanine + CO2. Its pathway is cofactor biosynthesis; (R)-pantothenate biosynthesis; beta-alanine from L-aspartate: step 1/1. Catalyzes the pyruvoyl-dependent decarboxylation of aspartate to produce beta-alanine. The sequence is that of Aspartate 1-decarboxylase from Campylobacter curvus (strain 525.92).